We begin with the raw amino-acid sequence, 334 residues long: Ribosomal RNA small subunit methyltransferase C (334 aa).

This sequence belongs to the methyltransferase superfamily. RsmC family. In terms of assembly, monomer.

It is found in the cytoplasm. It carries out the reaction guanosine(1207) in 16S rRNA + S-adenosyl-L-methionine = N(2)-methylguanosine(1207) in 16S rRNA + S-adenosyl-L-homocysteine + H(+). Specifically methylates the guanine in position 1207 of 16S rRNA in the 30S particle. This Idiomarina loihiensis (strain ATCC BAA-735 / DSM 15497 / L2-TR) protein is Ribosomal RNA small subunit methyltransferase C.